The chain runs to 429 residues: MIAEIVSIGDELLKGGKVNTNASFIAAALGGIGVPVIRIVACSDDEDQIITVLSESLSRTDLVLVTGGLGPTRDDRTKKAVMRLLQRSVVESEEAFHMLASWFTARGRMLPDTLRDQATIIEGSVLVPNSVGTAAGMIISCGERFGNSSLVLMPGVPSEMQEMMRKTVIPFFAGQSTTAILHTPVKTVGIGESALADLIAAEEDALPEGTTLAYLPHTAGVDLVVSTVGSITEVVERDNRRVVDAILSRAGRFIYATGDTTLEETVGRMLAENSLSIAVAESCTGGLLASRLTDVPGSSAYFQQGIISYSNDAKVQLLGVDRMTLEAFGAVSEPVAKEMARGVLERSGADIAVSTTGIAGPSGGSGDKPVGTLCIGIAGKKSDGSIAFRTGTFRMAGTRAQNKQRFSEAALREAWTYLQEVVGPVRVAG.

This sequence belongs to the CinA family.

This is CinA-like protein from Chlorobium limicola (strain DSM 245 / NBRC 103803 / 6330).